The primary structure comprises 552 residues: Phosphoglucomutase (552 aa).

S143 acts as the Phosphoserine intermediate in catalysis. Positions 143, 295, 297, and 299 each coordinate Mg(2+).

The protein belongs to the phosphohexose mutase family. Requires Mg(2+) as cofactor.

It carries out the reaction alpha-D-glucose 1-phosphate = alpha-D-glucose 6-phosphate. It functions in the pathway glycolipid metabolism; diglucosyl-diacylglycerol biosynthesis. In terms of biological role, catalyzes the interconversion between glucose-6-phosphate and alpha-glucose-1-phosphate. This is the first step in the biosynthesis of diglucosyl-diacylglycerol (Glc2-DAG), i.e. the predominant glycolipid found in the S.aureus membrane, which is also used as a membrane anchor for lipoteichoic acid (LTA). The protein is Phosphoglucomutase (pgcA) of Staphylococcus aureus (strain bovine RF122 / ET3-1).